The sequence spans 121 residues: Large ribosomal subunit protein bL12 (121 aa).

Belongs to the bacterial ribosomal protein bL12 family. As to quaternary structure, homodimer. Part of the ribosomal stalk of the 50S ribosomal subunit. Forms a multimeric L10(L12)X complex, where L10 forms an elongated spine to which 2 to 4 L12 dimers bind in a sequential fashion. Binds GTP-bound translation factors.

In terms of biological role, forms part of the ribosomal stalk which helps the ribosome interact with GTP-bound translation factors. Is thus essential for accurate translation. The chain is Large ribosomal subunit protein bL12 from Xanthomonas campestris pv. campestris (strain B100).